Here is a 586-residue protein sequence, read N- to C-terminus: Septin-9 (586 aa).

An N-acetylmethionine modification is found at Met1. The span at 1-14 (MKKSYSGGTRTSSG) shows a compositional bias: low complexity. Disordered regions lie at residues 1–49 (MKKS…RVQT), 62–108 (KFQD…SRRT), and 134–268 (RAEV…PASR). Phosphoserine is present on residues Ser22 and Ser30. A phosphothreonine mark is found at Thr38, Thr42, and Thr49. At Lys62 the chain carries N6-acetyllysine. A phosphoserine mark is found at Ser82, Ser85, Ser89, and Ser96. A compositionally biased stretch (basic and acidic residues) spans 134-151 (RAEVLGHKTPEPAPRRTE). Thr142 carries the post-translational modification Phosphothreonine. At Tyr278 the chain carries Phosphotyrosine. The 273-residue stretch at 295 to 567 (QGFEFNIMVV…EAYRVKRLNE (273 aa)) folds into the Septin-type G domain. Positions 305–312 (GQSGLGKS) are G1 motif. Position 305–312 (305–312 (GQSGLGKS)) interacts with GTP. Phosphoserine occurs at positions 327 and 332. Residues Thr339, Gly365, 445-453 (KADTLTLEE), Gly501, and Arg516 each bind GTP. Positions 362–365 (DTPG) are G3 motif. The interval 444–447 (AKAD) is G4 motif.

It belongs to the TRAFAC class TrmE-Era-EngA-EngB-Septin-like GTPase superfamily. Septin GTPase family. As to quaternary structure, septins polymerize into heterooligomeric protein complexes that form filaments, and associate with cellular membranes, actin filaments, and microtubules. GTPase activity is required for filament formation. Interacts with SEPTIN2, SEPTIN6, SEPTIN7, SEPTIN11 and SEPTIN14. Interacts with RTKN and ARHGEF18. In a mesenchymal cell line, Rho/RTKN signals cause disruption of wild-type septin filaments, but not of those containing isoform 2 variants HNA Trp-106 and Phe-111. In a mesenchymal cell line, isoform 2 variants HNA Trp-106 and Phe-111, but not wild type, form filaments with SEPTIN4. In terms of tissue distribution, widely expressed. Isoforms are differentially expressed in testes, kidney, liver heart, spleen, brain, peripheral blood leukocytes, skeletal muscle and kidney. Specific isoforms appear to demonstrate tissue specificity. Isoform 5 is the most highly expressed in fetal tissue. Isoform 1 is detected in all tissues except the brain and thymus, while isoform 2, isoform 3, and isoform 4 are detected at low levels in approximately half of the fetal tissues.

It is found in the cytoplasm. The protein resides in the cytoskeleton. Filament-forming cytoskeletal GTPase. May play a role in cytokinesis (Potential). May play a role in the internalization of 2 intracellular microbial pathogens, Listeria monocytogenes and Shigella flexneri. The sequence is that of Septin-9 from Homo sapiens (Human).